Consider the following 1849-residue polypeptide: Brefeldin A-inhibited guanine nucleotide-exchange protein 1 (1849 aa).

The segment at tyrosine 2–arginine 224 is DCB; DCB:DCB and DCB:HUS domain interaction. Residues alanine 46–alanine 58 show a composition bias toward basic and acidic residues. Disordered stretches follow at residues alanine 46–leucine 65, glutamate 216–alanine 301, and isoleucine 350–alanine 413. A phosphoserine mark is found at serine 52, serine 286, serine 289, and serine 290. 2 stretches are compositionally biased toward polar residues: residues isoleucine 350–threonine 360 and serine 394–proline 409. Residues serine 397 and serine 410 each carry the phosphoserine modification. Residues alanine 557 to asparagine 577 are HUS; DCB:HUS domain interaction. The segment at proline 634–aspartate 687 is disordered. The span at lysine 644–threonine 658 shows a compositional bias: basic and acidic residues. Over residues serine 664–serine 684 the composition is skewed to low complexity. An SEC7 domain is found at phenylalanine 709 to serine 840. Residues lysine 711–arginine 715 carry the Nuclear localization signal (NLS) motif. Phosphoserine occurs at positions 1079, 1566, and 1569.

In terms of assembly, homodimer. Interacts with ARFGEF2/BIG2; both proteins are probably part of the same or very similar macromolecular complexes. Interacts with FKBP2. Interacts with MYO9B. Interacts with PRKAR1A and PRKAR2A. Interacts with PPP1CC. Interacts with NCL, FBL, NUP62 and U3 small nucleolar RNA. Interacts with DPY30. Interacts with PDE3A. Interacts with KANK1. Interacts with TBC1D22A and TBC1D22B. Phosphorylated. In vitro phosphorylated by PKA reducing its GEF activity and dephosphorylated by phosphatase PP1. Abundantly expressed in kidney, somewhat less abundant in lung, spleen, and brain, and still less abundant in heart.

The protein resides in the cytoplasm. It localises to the perinuclear region. It is found in the golgi apparatus. Its subcellular location is the trans-Golgi network. The protein localises to the nucleus. The protein resides in the nucleolus. It localises to the nucleus matrix. It is found in the membrane. Its activity is regulated as follows. Inhibited by brefeldin A. Its function is as follows. Promotes guanine-nucleotide exchange on ARF1 and ARF3. Promotes the activation of ARF1/ARF3 through replacement of GDP with GTP. Involved in vesicular trafficking. Required for the maintenance of Golgi structure; the function may be independent of its GEF activity. Required for the maturation of integrin beta-1 in the Golgi. Involved in the establishment and persistence of cell polarity during directed cell movement in wound healing. Proposed to act as A kinase-anchoring protein (AKAP) and may mediate crosstalk between Arf and PKA pathways. Inhibits GAP activity of MYO9B probably through competitive RhoA binding. The function in the nucleus remains to be determined. The chain is Brefeldin A-inhibited guanine nucleotide-exchange protein 1 (ARFGEF1) from Bos taurus (Bovine).